The primary structure comprises 392 residues: Selenide, water dikinase 1 (392 aa).

The active site involves C31. ATP is bound by residues K32, 67–69, D87, D110, and 161–164; these read GMD and GGQT. Residue D69 coordinates Mg(2+). D110 provides a ligand contact to Mg(2+). Residue D265 coordinates Mg(2+).

Belongs to the selenophosphate synthase 1 family. Class II subfamily. In terms of assembly, homodimer. It depends on Mg(2+) as a cofactor.

It is found in the cell membrane. Its subcellular location is the nucleus membrane. The enzyme catalyses hydrogenselenide + ATP + H2O = selenophosphate + AMP + phosphate + 2 H(+). Functionally, synthesizes selenophosphate from selenide and ATP. This Xenopus tropicalis (Western clawed frog) protein is Selenide, water dikinase 1 (sephs1).